The primary structure comprises 485 residues: Ribulose bisphosphate carboxylase large chain 2 (485 aa).

Substrate contacts are provided by Asn125 and Thr175. The Proton acceptor role is filled by Lys177. A substrate-binding site is contributed by Lys179. Positions 203, 205, and 206 each coordinate Mg(2+). Residue Lys203 is modified to N6-carboxylysine. Residue His295 is the Proton acceptor of the active site. Substrate contacts are provided by Arg296, His328, and Ser380.

It belongs to the RuBisCO large chain family. Type I subfamily. Heterohexadecamer of 8 large chains and 8 small chains. The cofactor is Mg(2+).

The catalysed reaction is 2 (2R)-3-phosphoglycerate + 2 H(+) = D-ribulose 1,5-bisphosphate + CO2 + H2O. It carries out the reaction D-ribulose 1,5-bisphosphate + O2 = 2-phosphoglycolate + (2R)-3-phosphoglycerate + 2 H(+). RuBisCO catalyzes two reactions: the carboxylation of D-ribulose 1,5-bisphosphate, the primary event in carbon dioxide fixation, as well as the oxidative fragmentation of the pentose substrate. Both reactions occur simultaneously and in competition at the same active site. This Methylibium petroleiphilum (strain ATCC BAA-1232 / LMG 22953 / PM1) protein is Ribulose bisphosphate carboxylase large chain 2.